Consider the following 505-residue polypeptide: RNA-splicing ligase RtcB homolog (505 aa).

Residues Asp-119, Cys-122, His-227, and His-259 each coordinate Mn(2+). 226 to 230 (NHYAE) contacts GMP. Ser-300 is subject to Phosphoserine. Position 353 (His-353) interacts with Mn(2+). GMP is bound by residues 353–354 (HN), 402–405 (GGTM), Ser-409, and 428–431 (HGAG). His-428 (GMP-histidine intermediate) is an active-site residue. A Glycyl lysine isopeptide (Lys-Gly) (interchain with G-Cter in SUMO2) cross-link involves residue Lys-496. Lys-504 lines the GMP pocket.

It belongs to the RtcB family. As to quaternary structure, catalytic component of the tRNA-splicing ligase complex. Mn(2+) serves as cofactor.

It is found in the nucleus. It localises to the cytoplasm. It catalyses the reaction a 3'-end 3'-phospho-ribonucleotide-RNA + a 5'-end dephospho-ribonucleoside-RNA + GTP = a ribonucleotidyl-ribonucleotide-RNA + GMP + diphosphate. The catalysed reaction is a 3'-end 2',3'-cyclophospho-ribonucleotide-RNA + a 5'-end dephospho-ribonucleoside-RNA + GTP + H2O = a ribonucleotidyl-ribonucleotide-RNA + GMP + diphosphate + H(+). Its function is as follows. Catalytic subunit of the tRNA-splicing ligase complex that acts by directly joining spliced tRNA halves to mature-sized tRNAs by incorporating the precursor-derived splice junction phosphate into the mature tRNA as a canonical 3',5'-phosphodiester. May act as an RNA ligase with broad substrate specificity, and may function toward other RNAs. The polypeptide is RNA-splicing ligase RtcB homolog (Macaca fascicularis (Crab-eating macaque)).